Consider the following 1196-residue polypeptide: Phosphatidylinositol-3,5-bisphosphate 3-phosphatase MTMR3 (1196 aa).

Ser-8 is subject to Phosphoserine. The Myotubularin phosphatase domain maps to Glu-155–Tyr-576. Positions 326, 351, and 352 each coordinate a 1,2-diacyl-sn-glycero-3-phospho-(1D-myo-inositol-3,5-bisphosphate). Asn-326, Asn-351, and Ile-352 together coordinate a 1,2-diacyl-sn-glycero-3-phospho-(1D-myo-inositol-3-phosphate). Cys-413 acts as the Phosphocysteine intermediate in catalysis. Residues Ser-414, Asp-415, Gly-416, Trp-417, Asp-418, Arg-419, Lys-455, and Arg-459 each coordinate a 1,2-diacyl-sn-glycero-3-phospho-(1D-myo-inositol-3,5-bisphosphate). The a 1,2-diacyl-sn-glycero-3-phospho-(1D-myo-inositol-3-phosphate) site is built by Ser-414, Asp-415, Gly-416, Trp-417, Asp-418, and Arg-419. Arg-459 contributes to the a 1,2-diacyl-sn-glycero-3-phospho-(1D-myo-inositol-3-phosphate) binding site. Residues Asp-587–Arg-612 form a disordered region. A compositionally biased stretch (pro residues) spans Tyr-593–Pro-603. Phosphoserine occurs at positions 613, 633, 647, and 651. Disordered stretches follow at residues Thr-697–Glu-719 and Glu-855–Ser-900. Residue Ser-907 is modified to Phosphoserine. Over residues Asn-993–Pro-1008 the composition is skewed to polar residues. Residues Asn-993 to Pro-1019 are disordered. Residues Gln-1027–Thr-1060 adopt a coiled-coil conformation. Position 1062 is a phosphoserine (Ser-1062). Residues Asp-1117–His-1177 form an FYVE-type zinc finger. Zn(2+) contacts are provided by Cys-1123, Cys-1126, Cys-1139, Cys-1142, Cys-1147, Cys-1150, Cys-1169, and Cys-1172.

This sequence belongs to the protein-tyrosine phosphatase family. Non-receptor class myotubularin subfamily. As to quaternary structure, forms heterodimers with MTMR4 that recruit both CEP55 and PLK1; occurs during early mitosis, regulates the phosphorylation of CEP55 by PLK1 and its recruitment to the midbody where it mediates cell abscission.

It is found in the cytoplasm. It localises to the cytosol. Its subcellular location is the membrane. It catalyses the reaction a 1,2-diacyl-sn-glycero-3-phospho-(1D-myo-inositol-3,5-bisphosphate) + H2O = a 1,2-diacyl-sn-glycero-3-phospho-(1D-myo-inositol-5-phosphate) + phosphate. It carries out the reaction a 1,2-diacyl-sn-glycero-3-phospho-(1D-myo-inositol-3-phosphate) + H2O = a 1,2-diacyl-sn-glycero-3-phospho-(1D-myo-inositol) + phosphate. The enzyme catalyses 1,2-dihexadecanoyl-sn-glycero-3-phospho-(1D-myo-inositol-3-phosphate) + H2O = 1,2-dihexadecanoyl-sn-glycero-3-phospho-(1D-myo-inositol) + phosphate. The catalysed reaction is 1,2-dioctanoyl-sn-glycero-3-phospho-(1-D-myo-inositol-3-phosphate) + H2O = 1,2-dioctanoyl-sn-glycero-3-phospho-(1D-myo-inositol) + phosphate. It catalyses the reaction 1,2-dihexadecanoyl-sn-glycero-3-phospho-(1D-myo-inositol-3,5-phosphate) + H2O = 1,2-dihexadecanoyl-sn-glycero-3-phospho-(1D-myo-inositol-5-phosphate) + phosphate. Functionally, lipid phosphatase that specifically dephosphorylates the D-3 position of phosphatidylinositol 3-phosphate and phosphatidylinositol 3,5-bisphosphate, generating phosphatidylinositol and phosphatidylinositol 5-phosphate. Decreases the levels of phosphatidylinositol 3-phosphate, a phospholipid found in cell membranes where it acts as key regulator of both cell signaling and intracellular membrane traffic. Could also have a molecular sequestering/adapter activity and regulate biological processes independently of its phosphatase activity. It includes the regulation of midbody abscission during mitotic cytokinesis. The chain is Phosphatidylinositol-3,5-bisphosphate 3-phosphatase MTMR3 from Mus musculus (Mouse).